Reading from the N-terminus, the 281-residue chain is NADPH-dependent 7-cyano-7-deazaguanine reductase (281 aa).

Isoleucine 88–serine 90 is a substrate binding site. Serine 90–lysine 91 is a binding site for NADPH. Cysteine 189 acts as the Thioimide intermediate in catalysis. The active-site Proton donor is aspartate 196. Histidine 228 to glutamate 229 is a substrate binding site. Arginine 257–glycine 258 contacts NADPH.

Belongs to the GTP cyclohydrolase I family. QueF type 2 subfamily. As to quaternary structure, homodimer.

The protein resides in the cytoplasm. It carries out the reaction 7-aminomethyl-7-carbaguanine + 2 NADP(+) = 7-cyano-7-deazaguanine + 2 NADPH + 3 H(+). Its pathway is tRNA modification; tRNA-queuosine biosynthesis. Its function is as follows. Catalyzes the NADPH-dependent reduction of 7-cyano-7-deazaguanine (preQ0) to 7-aminomethyl-7-deazaguanine (preQ1). The protein is NADPH-dependent 7-cyano-7-deazaguanine reductase of Sodalis glossinidius (strain morsitans).